Consider the following 590-residue polypeptide: G protein-coupled receptor kinase 5 (590 aa).

The tract at residues 1-185 (MELENIVANT…LERQPVTKNT (185 aa)) is N-terminal. Residues 20 to 39 (GGKRKGKSKKWKEILKFPHI) form an interaction with calmodulin region. One can recognise an RGS domain in the interval 53 to 171 (YCSLCDKQPI…LDSMFFDRFL (119 aa)). The Protein kinase domain occupies 186–448 (FRQYRVLGKG…AAEVKRHPFF (263 aa)). ATP is bound by residues 192 to 200 (LGKGGFGEV) and Lys-215. Asp-311 (proton acceptor) is an active-site residue. The Nuclear localization signal signature appears at 388–395 (RKEKVKRE). Positions 449–514 (RNMNFKRLEA…GSVSIPWQNE (66 aa)) constitute an AGC-kinase C-terminal domain. Ser-484 bears the Phosphoserine; by autocatalysis mark. A Phosphothreonine; by autocatalysis modification is found at Thr-485. A disordered region spans residues 531–590 (GTLPPDLNRNHPPEPPKKGLLQRLFKRQHQNNSKSSPSSKTSFNHHINSNHVSSNSTGSS). Positions 538–547 (NRNHPPEPPK) are enriched in basic and acidic residues. A sufficient for membrane localization region spans residues 546-565 (PKKGLLQRLFKRQHQNNSKS). Positions 563–590 (SKSSPSSKTSFNHHINSNHVSSNSTGSS) are enriched in low complexity. At Ser-579 the chain carries Phosphoserine.

This sequence belongs to the protein kinase superfamily. AGC Ser/Thr protein kinase family. GPRK subfamily. Interacts with ST13 (via the C-terminus 303-319 AA). Interacts with TP53/p53. Interacts with HTR4 (via C-terminus 330-346 AA); this interaction is promoted by 5-HT (serotonin). Interacts with HDAC5. Interacts with GIT1. In terms of processing, autophosphorylated. Autophosphorylation may play a critical role in the regulation of GRK5 kinase activity. As to expression, highest levels in heart, placenta, lung &gt; skeletal muscle &gt; brain, liver, pancreas &gt; kidney.

The protein localises to the cytoplasm. The protein resides in the nucleus. It is found in the cell membrane. The catalysed reaction is [G-protein-coupled receptor] + ATP = [G-protein-coupled receptor]-phosphate + ADP + H(+). With respect to regulation, inhibited by calmodulin with an IC(50) of 50 nM. Calmodulin inhibits GRK5 association with receptor and phospholipid. Its function is as follows. Serine/threonine kinase that phosphorylates preferentially the activated forms of a variety of G-protein-coupled receptors (GPCRs). Such receptor phosphorylation initiates beta-arrestin-mediated receptor desensitization, internalization, and signaling events leading to their down-regulation. Phosphorylates a variety of GPCRs, including adrenergic receptors, muscarinic acetylcholine receptors (more specifically Gi-coupled M2/M4 subtypes), dopamine receptors and opioid receptors. In addition to GPCRs, also phosphorylates various substrates: Hsc70-interacting protein/ST13, TP53/p53, HDAC5, and arrestin-1/ARRB1. Phosphorylation of ARRB1 by GRK5 inhibits G-protein independent MAPK1/MAPK3 signaling downstream of 5HT4-receptors. Phosphorylation of HDAC5, a repressor of myocyte enhancer factor 2 (MEF2) leading to nuclear export of HDAC5 and allowing MEF2-mediated transcription. Phosphorylation of TP53/p53, a crucial tumor suppressor, inhibits TP53/p53-mediated apoptosis. Phosphorylation of ST13 regulates internalization of the chemokine receptor. Phosphorylates rhodopsin (RHO) (in vitro) and a non G-protein-coupled receptor, LRP6 during Wnt signaling (in vitro). This Homo sapiens (Human) protein is G protein-coupled receptor kinase 5 (GRK5).